The sequence spans 290 residues: RxLR effector protein Avr4 (290 aa).

Positions 1–24 are cleaved as a signal peptide; that stretch reads MRSLHILLVITASLLASLAVSAEA. A disordered region spans residues 33–56; the sequence is VVENNKDKSRFLRDGGTTEAQTDE. Residues 36-45 show a composition bias toward basic and acidic residues; sequence NNKDKSRFLR. Residues 42 to 58 carry the RxLR-dEER motif; that stretch reads RFLRDGGTTEAQTDEER. A W1 motif region spans residues 118 to 141; that stretch reads KYERMQWQKLNEGQTLTYMRVGDR. The tract at residues 151 to 174 is W2 motif; that stretch reads QLLRWVAQKKTVKSVYDDLQIEGF. The W3 motif stretch occupies residues 224–247; sequence VFEKWAMEGTHIKSVIKTLNLNNK. Asn-246 carries an N-linked (GlcNAc...) asparagine glycan. The y motif stretch occupies residues 249 to 270; that stretch reads ASEMANNENFPALLKYVKLYLD.

It belongs to the RxLR effector family.

The protein localises to the secreted. It is found in the host cytoplasm. It localises to the host nucleus. Its subcellular location is the host nucleolus. The protein resides in the host cytoskeleton. Its function is as follows. Secreted effector that acts as an elicitor of hypersensitive response (HR) specifically on plants carrying defense protein R4, through its interaction with this protein. The chain is RxLR effector protein Avr4 from Phytophthora mirabilis.